The sequence spans 226 residues: Late protein I226R (226 aa).

A signal peptide spans 1-16; the sequence is MKMETFLVCLFHNADG. N-linked (GlcNAc...) asparagine; by host glycosylation is found at asparagine 142 and asparagine 164.

Belongs to the asfivirus I226R family.

Functionally, plays a role in the inhibition of host NF-kappa-B and IRF3 signaling pathways. Mechanistically, promotes the degradation of host IKBKG through enhancing its ubiquitination leading to inhibition of both pathways. This chain is Late protein I226R, found in African swine fever virus (isolate Tick/South Africa/Pretoriuskop Pr4/1996) (ASFV).